Here is a 400-residue protein sequence, read N- to C-terminus: uncharacterized protein (400 aa).

It belongs to the mimivirus R640 family.

It is found in the virion. This is an uncharacterized protein from Acanthamoeba polyphaga (Amoeba).